A 235-amino-acid polypeptide reads, in one-letter code: tRNA pseudouridine synthase B (235 aa).

Residue aspartate 48 is the Nucleophile of the active site.

The protein belongs to the pseudouridine synthase TruB family. Type 1 subfamily.

The catalysed reaction is uridine(55) in tRNA = pseudouridine(55) in tRNA. Responsible for synthesis of pseudouridine from uracil-55 in the psi GC loop of transfer RNAs. The chain is tRNA pseudouridine synthase B from Parabacteroides distasonis (strain ATCC 8503 / DSM 20701 / CIP 104284 / JCM 5825 / NCTC 11152).